Reading from the N-terminus, the 683-residue chain is Pre-mRNA-splicing factor CLF1 (683 aa).

HAT repeat units lie at residues 40–72 (DWQR…FEYE), 74–106 (RDMR…CELR), 108–140 (RDVN…MEES), 142–173 (GQVE…FETR), 175–206 (GQVE…FERK), 291–323 (SILF…LLEE), 336–367 (ATVK…FLET), 374–407 (LTRS…FEIR), 409–440 (EKLD…LEIK), 442–474 (KEFD…LEEN), 476–513 (GDED…FETD), 515–547 (SEFE…YESS), and 582–620 (ENKE…YESI).

This sequence belongs to the crooked-neck family. As to quaternary structure, associated with the spliceosome.

Its subcellular location is the nucleus. Its function is as follows. Involved in pre-mRNA splicing and cell cycle progression. Required for the spliceosome assembly and initiation of the DNA replication. The sequence is that of Pre-mRNA-splicing factor CLF1 (CLF1) from Eremothecium gossypii (strain ATCC 10895 / CBS 109.51 / FGSC 9923 / NRRL Y-1056) (Yeast).